We begin with the raw amino-acid sequence, 245 residues long: MNARTPNSLTMGGDKSFADASPVPIANVRSLIEATFQRLRADIVEGRLAAGSRLAIEDLKSRYEVSGGTVREALSLLVANNLVQTQAQRGFHVTPMSLDDMRDLAATRIALECEALRQSVLNGDAEWEARVVSSYHRLSLLDERTMRDPVHLFNQWEQANRDFHEALISACSSAWTQRFLSILYLQMERYRRLTAMHNRPARNVHEEHLALRDSALARDAERCTELLRMHIESSISVVRQFGLLR.

The region spanning 29-96 (RSLIEATFQR…AQRGFHVTPM (68 aa)) is the HTH gntR-type domain. Residues 56-75 (IEDLKSRYEVSGGTVREALS) constitute a DNA-binding region (H-T-H motif).

This is an uncharacterized protein from Paraburkholderia xenovorans (strain LB400).